The primary structure comprises 653 residues: tRNA uridine 5-carboxymethylaminomethyl modification enzyme MnmG (653 aa).

Residues 18–23 (GAGHAG), V130, and T195 contribute to the FAD site. Position 287–301 (287–301 (GPRYCPSIEDKVVRF)) interacts with NAD(+). Q384 is a binding site for FAD. The segment at 624–653 (SQTKSSASVDKRASSDNESSRPTSSASDSL) is disordered. Basic and acidic residues predominate over residues 632 to 642 (VDKRASSDNES). The span at 643-653 (SRPTSSASDSL) shows a compositional bias: polar residues.

Belongs to the MnmG family. Homodimer. Heterotetramer of two MnmE and two MnmG subunits. FAD is required as a cofactor.

It localises to the cytoplasm. Functionally, NAD-binding protein involved in the addition of a carboxymethylaminomethyl (cmnm) group at the wobble position (U34) of certain tRNAs, forming tRNA-cmnm(5)s(2)U34. This is tRNA uridine 5-carboxymethylaminomethyl modification enzyme MnmG from Rhodopirellula baltica (strain DSM 10527 / NCIMB 13988 / SH1).